The chain runs to 133 residues: ATP synthase epsilon chain, chloroplastic (133 aa).

The protein belongs to the ATPase epsilon chain family. F-type ATPases have 2 components, CF(1) - the catalytic core - and CF(0) - the membrane proton channel. CF(1) has five subunits: alpha(3), beta(3), gamma(1), delta(1), epsilon(1). CF(0) has three main subunits: a, b and c.

It localises to the plastid. Its subcellular location is the chloroplast thylakoid membrane. Produces ATP from ADP in the presence of a proton gradient across the membrane. The polypeptide is ATP synthase epsilon chain, chloroplastic (Mesostigma viride (Green alga)).